Consider the following 58-residue polypeptide: Small ribosomal subunit protein bS21 (58 aa).

Residues 37–58 (FYDKPSVKKRAKSKAAAKYRGR) form a disordered region. Basic residues predominate over residues 43-58 (VKKRAKSKAAAKYRGR).

This sequence belongs to the bacterial ribosomal protein bS21 family.

This Chlamydia muridarum (strain MoPn / Nigg) protein is Small ribosomal subunit protein bS21 (rpsU).